Consider the following 365-residue polypeptide: Ribosomal RNA large subunit methyltransferase M (365 aa).

S-adenosyl-L-methionine is bound by residues serine 193, 226-229 (CPGG), aspartate 245, aspartate 265, and aspartate 282. Lysine 311 acts as the Proton acceptor in catalysis.

Belongs to the class I-like SAM-binding methyltransferase superfamily. RNA methyltransferase RlmE family. RlmM subfamily. In terms of assembly, monomer.

The protein resides in the cytoplasm. The catalysed reaction is cytidine(2498) in 23S rRNA + S-adenosyl-L-methionine = 2'-O-methylcytidine(2498) in 23S rRNA + S-adenosyl-L-homocysteine + H(+). Catalyzes the 2'-O-methylation at nucleotide C2498 in 23S rRNA. The chain is Ribosomal RNA large subunit methyltransferase M from Alteromonas mediterranea (strain DSM 17117 / CIP 110805 / LMG 28347 / Deep ecotype).